The sequence spans 124 residues: MMNEKILIVDDQYGIRILLNEVFNKEGYQTFQAANGLQALDIVTKERPDLVLLDMKIPGMDGIEILKRMKVIDENIRVIIMTAYGELDMIQESKELGALTHFAKPFDIDEIRDAVKKYLPLKSN.

In terms of domain architecture, Response regulatory spans 5–119 (KILIVDDQYG…EIRDAVKKYL (115 aa)). Residues D10, D11, D54, and K56 each coordinate Mg(2+). A 4-aspartylphosphate modification is found at D54.

Mg(2+) serves as cofactor. Post-translationally, phosphorylated by KinA and KinB. Dephosphorylated by RapA and RapB.

The protein resides in the cytoplasm. Its function is as follows. Key element in the phosphorelay regulating sporulation initiation. Phosphorylation of spo0B during sporulation initiation. The sequence is that of Sporulation initiation phosphotransferase F (spo0F) from Bacillus subtilis (strain 168).